Consider the following 657-residue polypeptide: ABC1 family protein YPL109C, mitochondrial (657 aa).

The N-terminal 15 residues, 1–15 (MSFLKFAYRNSWRYY), are a transit peptide targeting the mitochondrion.

It belongs to the protein kinase superfamily. ADCK protein kinase family.

The protein resides in the mitochondrion. The polypeptide is ABC1 family protein YPL109C, mitochondrial (Saccharomyces cerevisiae (strain ATCC 204508 / S288c) (Baker's yeast)).